Here is a 525-residue protein sequence, read N- to C-terminus: UPF0288 protein MM_0912 (525 aa).

The protein belongs to the UPF0288 family.

In Methanosarcina mazei (strain ATCC BAA-159 / DSM 3647 / Goe1 / Go1 / JCM 11833 / OCM 88) (Methanosarcina frisia), this protein is UPF0288 protein MM_0912.